Reading from the N-terminus, the 185-residue chain is Transcription factor FapR (185 aa).

This sequence belongs to the FapR family.

Transcriptional factor involved in regulation of membrane lipid biosynthesis by repressing genes involved in fatty acid and phospholipid metabolism. This is Transcription factor FapR from Staphylococcus aureus (strain Mu3 / ATCC 700698).